The sequence spans 575 residues: Chaperonin CPN60-2, mitochondrial (575 aa).

The transit peptide at 1 to 32 directs the protein to the mitochondrion; it reads MHRFASGLASKARLARKGANQIASRSSWSRNY.

It belongs to the chaperonin (HSP60) family.

It localises to the mitochondrion. In terms of biological role, implicated in mitochondrial protein import and macromolecular assembly. May facilitate the correct folding of imported proteins. May also prevent misfolding and promote the refolding and proper assembly of unfolded polypeptides generated under stress conditions in the mitochondrial matrix. This Cucurbita maxima (Pumpkin) protein is Chaperonin CPN60-2, mitochondrial (CPN60-2).